The sequence spans 177 residues: MALNLSQKQEVVAELADIAAKAHSLIAAEYAGTTVSQMTAMRKQARETGVFLKVVKNTLAARAVEGTDFAVAADKLVGPLLYAFSMEEPGAAGRLIKEFAKSNDKLQAKVVSIGGELFPAGHVDVLASLPTRDQALAMLARVLSEPAAMFARAVKAVGDKQGGGDEAAAPVAETAEA.

The protein belongs to the universal ribosomal protein uL10 family. As to quaternary structure, part of the ribosomal stalk of the 50S ribosomal subunit. The N-terminus interacts with L11 and the large rRNA to form the base of the stalk. The C-terminus forms an elongated spine to which L12 dimers bind in a sequential fashion forming a multimeric L10(L12)X complex.

Its function is as follows. Forms part of the ribosomal stalk, playing a central role in the interaction of the ribosome with GTP-bound translation factors. The protein is Large ribosomal subunit protein uL10 of Xanthomonas axonopodis pv. citri (strain 306).